The following is a 916-amino-acid chain: Translation initiation factor IF-2 (916 aa).

The disordered stretch occupies residues 1-325 (MTDSNDDKTL…QEKFRRSQVQ (325 aa)). A compositionally biased stretch (low complexity) spans 60-91 (ITPATPAAPVRAAEPAPAPAQARPQQSTPAPR). The span at 97–108 (GQANQRPQQSYQ) shows a compositional bias: polar residues. Residues 125–182 (SPEEMDARRRALAESQARDAQDAIRRAEEEKRRAAEEAVRKAAEAEEAARRAVEEAAR) show a composition bias toward basic and acidic residues. Composition is skewed to low complexity over residues 183-209 (QAEA…AEAR) and 229-243 (DGAA…PAAV). Residues 414 to 581 (SRPPVVTIMG…AVLLQAEILD (168 aa)) form the tr-type G domain. A G1 region spans residues 423–430 (GHVDHGKT). 423 to 430 (GHVDHGKT) is a binding site for GTP. A G2 region spans residues 448–452 (GITQH). The interval 469 to 472 (DTPG) is G3. GTP is bound by residues 469–473 (DTPGH) and 523–526 (NKID). Positions 523–526 (NKID) are G4. The G5 stretch occupies residues 559–561 (SAK).

Belongs to the TRAFAC class translation factor GTPase superfamily. Classic translation factor GTPase family. IF-2 subfamily.

Its subcellular location is the cytoplasm. Functionally, one of the essential components for the initiation of protein synthesis. Protects formylmethionyl-tRNA from spontaneous hydrolysis and promotes its binding to the 30S ribosomal subunits. Also involved in the hydrolysis of GTP during the formation of the 70S ribosomal complex. The chain is Translation initiation factor IF-2 from Rhizobium etli (strain ATCC 51251 / DSM 11541 / JCM 21823 / NBRC 15573 / CFN 42).